The sequence spans 300 residues: Protein CANDIDATE G-PROTEIN COUPLED RECEPTOR 2 (300 aa).

A run of 7 helical transmembrane segments spans residues 37–57 (GFLHNTVLVLASILFVAYLAY), 73–93 (IMIAYYGFLWLVSLLNLAWCC), 110–130 (LTLFTTSGMLFLEVSLVAFLF), 152–172 (IGLDLLLKAIYLFGFGVPLFI), 183–203 (WGLWVIHKLLLAGIYGMIFFM), 222–242 (ITVMLALNGLSLFACALTANG), and 245–265 (FGLWLYGITSVCYHAFYLPLL).

The protein belongs to the UPF0359 family. As to quaternary structure, interacts with GPA1. In terms of tissue distribution, expressed at low levels in seedlings.

The protein localises to the cell membrane. Functionally, plays a role in plants and microbes interactions. G-protein coupled melatonin receptor involved in root growth mediated by the bacterial quorum-sensing signals N-acyl-homoserine lactones (AHLs). Binds to melatonin. Phytomelatonin receptor required, in collaboration with GPA1, for melatonin-mediated stomatal closure involving H(2)O(2) and Ca(2+) signals. Essential for melatonin-mediated plant response to osmotic stress probably by activating reactive oxygen species (ROS) scavenging ability. This chain is Protein CANDIDATE G-PROTEIN COUPLED RECEPTOR 2, found in Arabidopsis thaliana (Mouse-ear cress).